Consider the following 143-residue polypeptide: UPF0201 protein Pars_1985 (143 aa).

The protein belongs to the UPF0201 family.

This chain is UPF0201 protein Pars_1985, found in Pyrobaculum arsenaticum (strain DSM 13514 / JCM 11321 / PZ6).